The primary structure comprises 826 residues: Periplasmic nitrate reductase (826 aa).

The segment at residues 1 to 32 (MELNRRDFMKANAAIAAAAAAGITIPVKNVQA) is a signal peptide (tat-type signal). Residues 37 to 93 (IRWDKAPCRYCGTGCSVLVGTKDGRVVATQGDPDAEVNRGLNCIKGYFLSKIMYGAD) enclose the 4Fe-4S Mo/W bis-MGD-type domain. The [4Fe-4S] cluster site is built by C44, C47, C51, and C79. Mo-bis(molybdopterin guanine dinucleotide)-binding positions include K81, Q148, N173, C177, 210 to 217 (WGSNMAEM), 241 to 245 (STYEH), 260 to 262 (QSD), M370, Q374, N480, 506 to 507 (SD), K529, D556, and 716 to 725 (TGRVLEHWHT). F792 is a binding site for substrate. Residues N800 and K817 each coordinate Mo-bis(molybdopterin guanine dinucleotide).

This sequence belongs to the prokaryotic molybdopterin-containing oxidoreductase family. NasA/NapA/NarB subfamily. Component of the periplasmic nitrate reductase NapAB complex composed of NapA and NapB. Requires [4Fe-4S] cluster as cofactor. It depends on Mo-bis(molybdopterin guanine dinucleotide) as a cofactor. In terms of processing, predicted to be exported by the Tat system. The position of the signal peptide cleavage has not been experimentally proven.

Its subcellular location is the periplasm. The catalysed reaction is 2 Fe(II)-[cytochrome] + nitrate + 2 H(+) = 2 Fe(III)-[cytochrome] + nitrite + H2O. In terms of biological role, catalytic subunit of the periplasmic nitrate reductase complex NapAB. Receives electrons from NapB and catalyzes the reduction of nitrate to nitrite. The protein is Periplasmic nitrate reductase of Actinobacillus succinogenes (strain ATCC 55618 / DSM 22257 / CCUG 43843 / 130Z).